Consider the following 249-residue polypeptide: MATLRVHPEAQAKVDVFREDLCSKTENLLGSYFPKKISELDAFLKEPALNEANLSNLKAPLDIPVPDPVKEKEKEERKKQQEKEEKEEKKKGDEDDKGPPCGPVNCNEKIVVLLQRLKPEIKDVTEQLNLVTTWLQLQIPRIEDGNNFGVAVQEKVFELMTNLHTKLEGFHTQISKYFSERGDAVAKAAKQPHVGDYRQLVHELDEAEYQEIRLMVMEIRNAYAVLYDIILKNFEKLKKPRGETKGMIY.

Residues 59 to 102 (APLDIPVPDPVKEKEKEERKKQQEKEEKEEKKKGDEDDKGPPCG) form a disordered region. Positions 68 to 98 (PVKEKEKEERKKQQEKEEKEEKKKGDEDDKG) are enriched in basic and acidic residues.

It belongs to the PA28 family. In terms of assembly, heterodimer of PSME1 and PSME2, which forms a hexameric ring. PSME1 can form homoheptamers.

Implicated in immunoproteasome assembly and required for efficient antigen processing. The PA28 activator complex enhances the generation of class I binding peptides by altering the cleavage pattern of the proteasome. This Mus musculus (Mouse) protein is Proteasome activator complex subunit 1 (Psme1).